Reading from the N-terminus, the 408-residue chain is Succinylornithine transaminase (408 aa).

Lys252 carries the N6-(pyridoxal phosphate)lysine modification.

The protein belongs to the class-III pyridoxal-phosphate-dependent aminotransferase family. AstC subfamily. Pyridoxal 5'-phosphate serves as cofactor.

The enzyme catalyses N(2)-succinyl-L-ornithine + 2-oxoglutarate = N-succinyl-L-glutamate 5-semialdehyde + L-glutamate. It functions in the pathway amino-acid degradation; L-arginine degradation via AST pathway; L-glutamate and succinate from L-arginine: step 3/5. Functionally, catalyzes the transamination of N(2)-succinylornithine and alpha-ketoglutarate into N(2)-succinylglutamate semialdehyde and glutamate. Can also act as an acetylornithine aminotransferase. The polypeptide is Succinylornithine transaminase (Salmonella typhi).